Here is a 164-residue protein sequence, read N- to C-terminus: Disulfide bond formation protein B (164 aa).

Topologically, residues 1–9 (MTLPSARTC) are cytoplasmic. Residues 10 to 26 (FLLGFLFCAALLAAALY) form a helical membrane-spanning segment. The Periplasmic portion of the chain corresponds to 27 to 44 (FQFSGGLEPCPLCISQRI). A disulfide bridge links cysteine 36 with cysteine 39. The chain crosses the membrane as a helical span at residues 45–61 (MVLAVALVFLAAAIHHP). Residues 62–68 (ASLGIRA) lie on the Cytoplasmic side of the membrane. A helical transmembrane segment spans residues 69-85 (YALLGTAVALGGASISG). Over 86 to 142 (RHVWLLHLPPEEVPECGPGLSYMFRNFPLGDTLKAMLSGTGDCAKVDWTFLGLSMPA) the chain is Periplasmic. Cysteines 101 and 128 form a disulfide. The chain crosses the membrane as a helical span at residues 143 to 161 (WVLICFLGLGAFSLLQWWN). At 162–164 (AER) the chain is on the cytoplasmic side.

This sequence belongs to the DsbB family.

Its subcellular location is the cell inner membrane. Its function is as follows. Required for disulfide bond formation in some periplasmic proteins. Acts by oxidizing the DsbA protein. In Methylococcus capsulatus (strain ATCC 33009 / NCIMB 11132 / Bath), this protein is Disulfide bond formation protein B.